The primary structure comprises 199 residues: Probable nicotinate-nucleotide adenylyltransferase (199 aa).

It belongs to the NadD family.

The catalysed reaction is nicotinate beta-D-ribonucleotide + ATP + H(+) = deamido-NAD(+) + diphosphate. It functions in the pathway cofactor biosynthesis; NAD(+) biosynthesis; deamido-NAD(+) from nicotinate D-ribonucleotide: step 1/1. Functionally, catalyzes the reversible adenylation of nicotinate mononucleotide (NaMN) to nicotinic acid adenine dinucleotide (NaAD). The chain is Probable nicotinate-nucleotide adenylyltransferase from Rhizobium johnstonii (strain DSM 114642 / LMG 32736 / 3841) (Rhizobium leguminosarum bv. viciae).